A 565-amino-acid chain; its full sequence is Adenine deaminase (565 aa).

The protein belongs to the metallo-dependent hydrolases superfamily. Adenine deaminase family. Mn(2+) is required as a cofactor.

It catalyses the reaction adenine + H2O + H(+) = hypoxanthine + NH4(+). The chain is Adenine deaminase from Cereibacter sphaeroides (strain ATCC 17023 / DSM 158 / JCM 6121 / CCUG 31486 / LMG 2827 / NBRC 12203 / NCIMB 8253 / ATH 2.4.1.) (Rhodobacter sphaeroides).